Here is a 396-residue protein sequence, read N- to C-terminus: S-adenosylmethionine synthase (396 aa).

Residue His16 participates in ATP binding. A Mg(2+)-binding site is contributed by Asp18. Glu44 provides a ligand contact to K(+). Residues Glu57 and Gln100 each coordinate L-methionine. Residues 100–110 (QSPDIAQGVDR) are flexible loop. ATP is bound by residues 167–169 (DAK), 233–234 (RF), Asp242, 248–249 (RK), Ala265, and Lys269. Asp242 is an L-methionine binding site. L-methionine is bound at residue Lys273.

The protein belongs to the AdoMet synthase family. As to quaternary structure, homotetramer; dimer of dimers. Mg(2+) serves as cofactor. The cofactor is K(+).

It localises to the cytoplasm. It catalyses the reaction L-methionine + ATP + H2O = S-adenosyl-L-methionine + phosphate + diphosphate. Its pathway is amino-acid biosynthesis; S-adenosyl-L-methionine biosynthesis; S-adenosyl-L-methionine from L-methionine: step 1/1. Functionally, catalyzes the formation of S-adenosylmethionine (AdoMet) from methionine and ATP. The overall synthetic reaction is composed of two sequential steps, AdoMet formation and the subsequent tripolyphosphate hydrolysis which occurs prior to release of AdoMet from the enzyme. The sequence is that of S-adenosylmethionine synthase from Paraburkholderia phytofirmans (strain DSM 17436 / LMG 22146 / PsJN) (Burkholderia phytofirmans).